The following is a 202-amino-acid chain: dITP/XTP pyrophosphatase (202 aa).

Residue 7 to 12 (SRNEAK) coordinates substrate. Residue aspartate 68 is the Proton acceptor of the active site. Aspartate 68 contacts Mg(2+). Substrate is bound by residues serine 69, 156–159 (FGYD), lysine 179, and 184–185 (HR).

Belongs to the HAM1 NTPase family. As to quaternary structure, homodimer. Requires Mg(2+) as cofactor.

It catalyses the reaction XTP + H2O = XMP + diphosphate + H(+). The catalysed reaction is dITP + H2O = dIMP + diphosphate + H(+). It carries out the reaction ITP + H2O = IMP + diphosphate + H(+). Its function is as follows. Pyrophosphatase that catalyzes the hydrolysis of nucleoside triphosphates to their monophosphate derivatives, with a high preference for the non-canonical purine nucleotides XTP (xanthosine triphosphate), dITP (deoxyinosine triphosphate) and ITP. Seems to function as a house-cleaning enzyme that removes non-canonical purine nucleotides from the nucleotide pool, thus preventing their incorporation into DNA/RNA and avoiding chromosomal lesions. In Frankia alni (strain DSM 45986 / CECT 9034 / ACN14a), this protein is dITP/XTP pyrophosphatase.